A 109-amino-acid chain; its full sequence is Small ribosomal subunit protein bS6 (109 aa).

Belongs to the bacterial ribosomal protein bS6 family.

Functionally, binds together with bS18 to 16S ribosomal RNA. The sequence is that of Small ribosomal subunit protein bS6 from Ehrlichia canis (strain Jake).